The primary structure comprises 662 residues: Probable protein phosphatase CG10417 (662 aa).

Residues 23–564 (AVGASSMQGW…DNMTAVIVQF (542 aa)) enclose the PPM-type phosphatase domain. Mn(2+) contacts are provided by aspartate 57 and glycine 58. Disordered regions lie at residues 219 to 275 (DGVA…FKHT) and 288 to 374 (GSND…DEDQ). Composition is skewed to polar residues over residues 238–252 (DSNT…STKN), 261–275 (NDQN…FKHT), and 288–319 (GSND…INSS). A phosphoserine mark is found at serine 289 and serine 306. Residues 320-334 (QDDEFTDDDADYEEN) show a composition bias toward acidic residues. Residues 337–347 (VKSPDTSSAES) are compositionally biased toward polar residues. Positions 349-374 (DCTENDDDGDEDGNEDSDEEETDEDQ) are enriched in acidic residues. Residues aspartate 506 and aspartate 555 each contribute to the Mn(2+) site. Over residues 591–609 (VSHSLNDQSASKRCASQNA) the composition is skewed to polar residues. A disordered region spans residues 591 to 662 (VSHSLNDQSA…KEVTIIVSSS (72 aa)). Phosphoserine occurs at positions 592, 594, and 599. The span at 616–637 (LEKNNSKRLKTDLEQENIKDRT) shows a compositional bias: basic and acidic residues. Position 637 is a phosphothreonine (threonine 637). 2 positions are modified to phosphoserine: serine 639 and serine 641.

Belongs to the PP2C family. Mg(2+) is required as a cofactor. Mn(2+) serves as cofactor.

It catalyses the reaction O-phospho-L-seryl-[protein] + H2O = L-seryl-[protein] + phosphate. The enzyme catalyses O-phospho-L-threonyl-[protein] + H2O = L-threonyl-[protein] + phosphate. This Drosophila melanogaster (Fruit fly) protein is Probable protein phosphatase CG10417.